Here is a 449-residue protein sequence, read N- to C-terminus: MFS-type transporter 1 (449 aa).

Residues 1–37 (MTHSSSNEHEKEDDRRASDDMMDRDDQNAKEEQDVSK) show a composition bias toward basic and acidic residues. The interval 1 to 43 (MTHSSSNEHEKEDDRRASDDMMDRDDQNAKEEQDVSKDAPPVN) is disordered. 6 helical membrane-spanning segments follow: residues 61–81 (VAGG…IGIF), 97–117 (TISW…LVVG), 127–147 (YILL…SLST), 152–172 (ILLS…TPAV), 185–205 (LANG…PIMF), and 212–232 (VGFP…LIIA). Asn233 is a glycosylation site (N-linked (GlcNAc...) asparagine). A run of 6 helical transmembrane segments spans residues 262-282 (LLTT…INYI), 298-318 (YLIP…GFVA), 326-346 (VHTF…LPAA), 349-369 (APII…VAIL), 390-410 (FGVL…FVAH), and 420-440 (IWTG…RISL).

It belongs to the major facilitator superfamily. Monocarboxylate porter (TC 2.A.1.13) family.

The protein resides in the cell membrane. The catalysed reaction is erythrostominone(in) = erythrostominone(out). The enzyme catalyses deoxyerythrostominone(in) = deoxyerythrostominone(out). It carries out the reaction epierythrostominol(in) = epierythrostominol(out). It catalyses the reaction deoxyerythrostominol(in) = deoxyerythrostominol(out). Its function is as follows. MFS-type transporter that mediates the secretion of the 4 major naphthoquinone derivatives produced, erythrostominone (NQ1), deoxyerythrostominone (NQ2), epierythrostominol (NQ4), and deoxyerythrostominol (NQ5), as well as of 3 newly identified naphthoquinone derivatives termed NQ7, NQ8 and NQ9. The sequence is that of MFS-type transporter 1 from Ophiocordyceps sp. (strain BCC 1869) (Entomopathogenic fungus).